The primary structure comprises 295 residues: Cyclic dipyrimidine nucleotide synthase CdnE (295 aa).

A disordered region spans residues 1–28 (MAKYTEDQLTSWTKPPSDSEQTKLENSE). Positions 7–19 (DQLTSWTKPPSDS) are enriched in polar residues. Residues Gln51 and Ser53 each coordinate UTP. Asp67 contributes to the Mg(2+) binding site. Residues Lys123, Asn169, Arg197, Phe217, and Lys276 each coordinate UTP. The short motif at 275–277 (RKW) is the Pyrimidine specificity motif (R/Q)xW in donor pocket element.

It belongs to the CD-NTase family. E02 subfamily. As to quaternary structure, monomer. The cofactor is Mg(2+).

The enzyme catalyses 2 UTP = c-di-UMP + 2 diphosphate. The catalysed reaction is UTP + CTP = cyclic CMP-UMP + 2 diphosphate. Its function is as follows. Cyclic nucleotide synthase (second messenger synthase) of a CBASS antivirus system. CBASS (cyclic oligonucleotide-based antiphage signaling system) provides immunity against bacteriophage. The CD-NTase protein synthesizes cyclic nucleotides in response to infection; these serve as specific second messenger signals. The signals activate a diverse range of effectors, leading to bacterial cell death and thus abortive phage infection. A type I-B(UU) CBASS system. This chain is Cyclic dipyrimidine nucleotide synthase CdnE, found in Cecembia lonarensis (strain CCUG 58316 / KCTC 22772 / LW9).